The sequence spans 217 residues: T-complex protein 10A homolog 1 (217 aa).

The segment at 1-26 (MLAGQLEARDPKEGTHPEDPCPGAGA) is disordered. Positions 7-19 (EARDPKEGTHPED) are enriched in basic and acidic residues. The stretch at 69–110 (ADVHGKLRSHIDALREQNMELREKLRALQLQRWKARKKSAAS) forms a coiled coil. A leucine-zipper region spans residues 75–96 (LRSHIDALREQNMELREKLRAL). Basic and acidic residues predominate over residues 175–192 (ERISSWKTPPQEKRDKSL). The tract at residues 175 to 217 (ERISSWKTPPQEKRDKSLSRRRQDRRATPTGRPTPCAERRGGV) is disordered.

Belongs to the TCP10 family. Self-associates (via leucine zipper). Interacts (via leucine zipper) with ZIPK/DAPK3 (via leucine zipper). Interacts with MAD4.

The protein localises to the nucleus. In terms of biological role, may be involved in transcriptional regulation. Has in vitro transcription inhibition activity. The sequence is that of T-complex protein 10A homolog 1 (TCP10L) from Pan troglodytes (Chimpanzee).